The chain runs to 186 residues: Peptidyl-tRNA hydrolase (186 aa).

Tyr-14 is a tRNA binding site. The active-site Proton acceptor is the His-19. Residues Tyr-64, Asn-66, and Asn-112 each contribute to the tRNA site.

Belongs to the PTH family. Monomer.

It localises to the cytoplasm. It carries out the reaction an N-acyl-L-alpha-aminoacyl-tRNA + H2O = an N-acyl-L-amino acid + a tRNA + H(+). In terms of biological role, hydrolyzes ribosome-free peptidyl-tRNAs (with 1 or more amino acids incorporated), which drop off the ribosome during protein synthesis, or as a result of ribosome stalling. Catalyzes the release of premature peptidyl moieties from peptidyl-tRNA molecules trapped in stalled 50S ribosomal subunits, and thus maintains levels of free tRNAs and 50S ribosomes. This chain is Peptidyl-tRNA hydrolase, found in Lachnospira eligens (strain ATCC 27750 / DSM 3376 / VPI C15-48 / C15-B4) (Eubacterium eligens).